A 466-amino-acid chain; its full sequence is MFEKYPGKMEGLFRHNPYMAFPPAVPGLPPGLPPAVSFGSLQGAFQPKNTNPELPPRLGPVLSGLPQKGTQIPDHFRPPLRKPGKWCAMHVRVAYMILRHQEKMKGDSHKLDFRNDLLPCLPGPYGALPPGQELSHPASLFTATGAVHAAANPFTTAPGAHGPFLSPSTHIDPFGRPTSFASLAALSNGAFGGLGSPTFNSSAVFAQKESPGAPPAFASPPDPWGRLHRSPLAFPAWVRPPETARTPGSDKERPMERREPSVTKEEKDRDLPFSRPQLRVSPATPKARAGEEGARPAKESVRVKEERKEEAAAAAAAAAAAAAAAAAAAAAAAATTGPQGLHLLLERPRPPPFLGPSLPERCAGFPEPTWLAGPPRLARPPRFYEAGEELTGPGAMAAARLYSLDPAHPLLYSRLAPPPPPTATPGTPHLLSKTPPGALLGAPPPLVPAPRPSSPPRAPGPARADR.

A Glycyl lysine isopeptide (Lys-Gly) (interchain with G-Cter in SUMO2) cross-link involves residue K8. Asymmetric dimethylarginine is present on residues R229 and R239. Disordered stretches follow at residues 236 to 315 (AWVR…AAAA) and 410 to 466 (LLYS…RADR). The span at 248-272 (GSDKERPMERREPSVTKEEKDRDLP) shows a compositional bias: basic and acidic residues. S281 is subject to Phosphoserine. The segment covering 288 to 311 (RAGEEGARPAKESVRVKEERKEEA) has biased composition (basic and acidic residues). Positions 442-459 (APPPLVPAPRPSSPPRAP) are enriched in pro residues.

The polypeptide is Probable fibrosin-1 (Fbrs) (Mus musculus (Mouse)).